A 1188-amino-acid chain; its full sequence is Adenomatous polyposis coli protein-related protein 1 (1188 aa).

Residues 1-50 (MSSSSSDENETTIHRTGSNTGGSGIYSQPRAGSSKRTSNVRHDVSDVDDE) are disordered. Positions 1-486 (MSSSSSDENE…LSLRATRASP (486 aa)) are required for interaction with bar-1 and hmp-2. Residues 314 to 358 (NCLKVLASLLSPDARFTSLVDSATGILKYVSQYLANTSTHLELRS) form an ARM repeat. Over residues 579 to 588 (IQQQQQMQKA) the composition is skewed to low complexity. Disordered stretches follow at residues 579 to 624 (IQQQ…SMNP), 670 to 702 (TESEHHQLTSQQQNTTHYSSGSANTMTRSDGAT), 726 to 751 (TPNGTVPRKTSEELDSPDDVLPGPSL), 778 to 952 (QSEM…TMRF), 1003 to 1092 (CSMI…LKDK), and 1157 to 1181 (YQKPPFTGRNNGEMSNEKSVTPNPK). The required for interaction with pry-1 stretch occupies residues 600–1188 (DLDIPTSTVM…NPKQMLVTIV (589 aa)). 2 stretches are compositionally biased toward polar residues: residues 604–624 (PTSTVMGTRSNSERSLGSMNP) and 677–701 (LTSQQQNTTHYSSGSANTMTRSDGA). Composition is skewed to polar residues over residues 778 to 788 (QSEMPTSSSTP) and 800 to 811 (FSPTQKTTSSPA). 2 stretches are compositionally biased toward basic and acidic residues: residues 832 to 843 (RRQDASDADRLL) and 871 to 900 (EPERRSHSKNEEADRRDAFTASHEPSDHNG). 4 stretches are compositionally biased toward polar residues: residues 909–929 (WSPQQQLHRMESLESQASSED), 937–946 (EPNSSTSGAA), 1014–1039 (QRNETTTTSRDSKALATSTPKGSASS), and 1164–1180 (GRNNGEMSNEKSVTPNP).

The protein belongs to the adenomatous polyposis coli (APC) family. Interacts (via N-terminus) with bar-1 and hmp-2; the interaction with hmp-2 is relatively weak. Interacts (via C-terminus) with pry-1 (via N-terminus). Probably associates with bar-1, gsk-3, pry-1 in a complex. During the L1 stage, expressed in vulval precursor cells (P3-8.p), seam cells and excretory cells.

It localises to the cell junction. The protein localises to the adherens junction. Its subcellular location is the cytoplasm. The protein resides in the nucleus. Functionally, has a role in endoderm cell specification and pharyngeal development. Required for the migration of epithelial cells, organization of the anterior seam cells and ceh-13 expression during embryo morphogenesis. Prevents hyperactivation of the Wnt signaling pathway during endoderm development, probably by preventing hmp-2 nuclear translocation. During larval development, apr-1 is required for expression of lin-39 in P3-8.p. Shown to negatively regulate Wnt signaling in vulval precursor cells. Has a role in cell division by establishing the polarity of the mother cell which forms the asymmetries of the daughter nuclei. During the L4 larval stage, it is required for the asymmetric division and self-renewal of seam cells. Thought to regulate export of wrm-1 from the nucleus possibly as part of a complex involving pry-1. In Caenorhabditis elegans, this protein is Adenomatous polyposis coli protein-related protein 1.